Here is a 332-residue protein sequence, read N- to C-terminus: Homoserine kinase (332 aa).

The protein belongs to the pseudomonas-type ThrB family.

It catalyses the reaction L-homoserine + ATP = O-phospho-L-homoserine + ADP + H(+). The protein operates within amino-acid biosynthesis; L-threonine biosynthesis; L-threonine from L-aspartate: step 4/5. The polypeptide is Homoserine kinase (Burkholderia cenocepacia (strain HI2424)).